A 552-amino-acid chain; its full sequence is Pyrophosphate--fructose 6-phosphate 1-phosphotransferase subunit beta (552 aa).

G90 is a binding site for diphosphate. A Mg(2+)-binding site is contributed by D184. Substrate contacts are provided by residues 212 to 214 (TID), 251 to 252 (KY), 259 to 261 (MGR), E320, and 425 to 428 (YEGR). D214 acts as the Proton acceptor in catalysis.

The protein belongs to the phosphofructokinase type A (PFKA) family. PPi-dependent PFK group II subfamily. Clade 'Long' sub-subfamily. As to quaternary structure, tetramer of two alpha (regulatory) and two beta (catalytic) chains. Requires Mg(2+) as cofactor.

Its subcellular location is the cytoplasm. The enzyme catalyses beta-D-fructose 6-phosphate + diphosphate = beta-D-fructose 1,6-bisphosphate + phosphate + H(+). It functions in the pathway carbohydrate degradation; glycolysis; D-glyceraldehyde 3-phosphate and glycerone phosphate from D-glucose: step 3/4. Its activity is regulated as follows. Allosterically activated by fructose 2,6-bisphosphate. Catalytic subunit of pyrophosphate--fructose 6-phosphate 1-phosphotransferase. Catalyzes the phosphorylation of D-fructose 6-phosphate, the first committing step of glycolysis. Uses inorganic phosphate (PPi) as phosphoryl donor instead of ATP like common ATP-dependent phosphofructokinases (ATP-PFKs), which renders the reaction reversible, and can thus function both in glycolysis and gluconeogenesis. The chain is Pyrophosphate--fructose 6-phosphate 1-phosphotransferase subunit beta from Ricinus communis (Castor bean).